Here is a 443-residue protein sequence, read N- to C-terminus: Pyrrolysine--tRNA ligase (443 aa).

The interval 103-177 (VRKAMPKSVA…PAAPVPTSAP (75 aa)) is disordered. Residues 131–177 (PAPATPVSAPAQAPAPSTGSASATSASAQRMANSAAAPAAPVPTSAP) show a composition bias toward low complexity.

This sequence belongs to the class-II aminoacyl-tRNA synthetase family.

It is found in the cytoplasm. The enzyme catalyses tRNA(Pyl) + L-pyrrolysine + ATP = L-pyrrolysyl-tRNA(Pyl) + AMP + diphosphate. Functionally, catalyzes the attachment of pyrrolysine to tRNA(Pyl). Pyrrolysine is a lysine derivative encoded by the termination codon UAG. The protein is Pyrrolysine--tRNA ligase of Methanosarcina acetivorans (strain ATCC 35395 / DSM 2834 / JCM 12185 / C2A).